The primary structure comprises 433 residues: uncharacterized protein (433 aa).

Positions 1 to 28 (MKICGLEKFRVFLSLISMVSLLCNGVNG) are cleaved as a signal peptide. Residues 29–274 (FTIVRSMAVN…QAELEPKKTG (246 aa)) are Extracellular-facing. Residues 235–250 (GENANPTANSGTSARS) show a composition bias toward polar residues. The interval 235 to 266 (GENANPTANSGTSARSNRNEQNKMEEPARNQA) is disordered. The segment covering 251–266 (NRNEQNKMEEPARNQA) has biased composition (basic and acidic residues). The chain crosses the membrane as a helical span at residues 275-295 (VVVAGVTVSLAAGFVLALATL). Topologically, residues 296 to 433 (LLMKKKQTSL…HDKGTDEDKG (138 aa)) are cytoplasmic. Disordered stretches follow at residues 320–340 (EEPV…PSFD) and 413–433 (KVIE…EDKG).

As to expression, component of the acid-insoluble and acid-soluble organic matrix of the aragonitic skeleton (at protein level).

It is found in the membrane. This is an uncharacterized protein from Acropora millepora (Staghorn coral).